The primary structure comprises 615 residues: Dihydroxy-acid dehydratase (615 aa).

Residue aspartate 81 participates in Mg(2+) binding. Cysteine 122 is a binding site for [2Fe-2S] cluster. Aspartate 123 and lysine 124 together coordinate Mg(2+). Lysine 124 carries the post-translational modification N6-carboxylysine. [2Fe-2S] cluster is bound at residue cysteine 195. Glutamate 491 provides a ligand contact to Mg(2+). The Proton acceptor role is filled by serine 517.

It belongs to the IlvD/Edd family. As to quaternary structure, homodimer. [2Fe-2S] cluster is required as a cofactor. Mg(2+) serves as cofactor.

It catalyses the reaction (2R)-2,3-dihydroxy-3-methylbutanoate = 3-methyl-2-oxobutanoate + H2O. It carries out the reaction (2R,3R)-2,3-dihydroxy-3-methylpentanoate = (S)-3-methyl-2-oxopentanoate + H2O. It participates in amino-acid biosynthesis; L-isoleucine biosynthesis; L-isoleucine from 2-oxobutanoate: step 3/4. Its pathway is amino-acid biosynthesis; L-valine biosynthesis; L-valine from pyruvate: step 3/4. Functionally, functions in the biosynthesis of branched-chain amino acids. Catalyzes the dehydration of (2R,3R)-2,3-dihydroxy-3-methylpentanoate (2,3-dihydroxy-3-methylvalerate) into 2-oxo-3-methylpentanoate (2-oxo-3-methylvalerate) and of (2R)-2,3-dihydroxy-3-methylbutanoate (2,3-dihydroxyisovalerate) into 2-oxo-3-methylbutanoate (2-oxoisovalerate), the penultimate precursor to L-isoleucine and L-valine, respectively. The protein is Dihydroxy-acid dehydratase of Shewanella piezotolerans (strain WP3 / JCM 13877).